The chain runs to 365 residues: Dual-specificity RNA methyltransferase RlmN (365 aa).

Residue Glu91 is the Proton acceptor of the active site. The Radical SAM core domain maps to 97-337 (ETSRGTLCIS…TTVRKTRGDD (241 aa)). A disulfide bridge connects residues Cys104 and Cys342. [4Fe-4S] cluster contacts are provided by Cys111, Cys115, and Cys118. Residues 168–169 (GE), Ser200, 222–224 (SLH), and Asn299 contribute to the S-adenosyl-L-methionine site. Cys342 acts as the S-methylcysteine intermediate in catalysis.

The protein belongs to the radical SAM superfamily. RlmN family. [4Fe-4S] cluster serves as cofactor.

Its subcellular location is the cytoplasm. It carries out the reaction adenosine(2503) in 23S rRNA + 2 reduced [2Fe-2S]-[ferredoxin] + 2 S-adenosyl-L-methionine = 2-methyladenosine(2503) in 23S rRNA + 5'-deoxyadenosine + L-methionine + 2 oxidized [2Fe-2S]-[ferredoxin] + S-adenosyl-L-homocysteine. The catalysed reaction is adenosine(37) in tRNA + 2 reduced [2Fe-2S]-[ferredoxin] + 2 S-adenosyl-L-methionine = 2-methyladenosine(37) in tRNA + 5'-deoxyadenosine + L-methionine + 2 oxidized [2Fe-2S]-[ferredoxin] + S-adenosyl-L-homocysteine. In terms of biological role, specifically methylates position 2 of adenine 2503 in 23S rRNA and position 2 of adenine 37 in tRNAs. m2A2503 modification seems to play a crucial role in the proofreading step occurring at the peptidyl transferase center and thus would serve to optimize ribosomal fidelity. The protein is Dual-specificity RNA methyltransferase RlmN of Nitrosospira multiformis (strain ATCC 25196 / NCIMB 11849 / C 71).